The primary structure comprises 336 residues: Ultraviolet-sensitive opsin (336 aa).

Topologically, residues 1 to 29 are extracellular; sequence MDAWTYQFGNLSKISPFEGPQYHLAPKWA. N-linked (GlcNAc...) asparagine glycosylation is present at asparagine 10. A helical membrane pass occupies residues 30–54; the sequence is FYLQAAFMGFVFFVGTPLNAIVLFV. Residues 55–66 lie on the Cytoplasmic side of the membrane; it reads TMKYKKLRQPLN. Residues 67-91 traverse the membrane as a helical segment; sequence YILVNISLGGFIFDTFSVSQVFFSA. Residues 92-106 lie on the Extracellular side of the membrane; the sequence is LRGYYFFGYTLCAME. A disulfide bridge links cysteine 103 with cysteine 180. The chain crosses the membrane as a helical span at residues 107-126; that stretch reads AAMGSIAGLVTGWSLAVLAF. At 127–145 the chain is on the cytoplasmic side; the sequence is ERYVVICKPFGSFKFGQSQ. The chain crosses the membrane as a helical span at residues 146–169; sequence ALGAVALTWIIGIGCATPPFWGWS. The Extracellular segment spans residues 170–195; sequence RYIPEGIGTACGPDWYTKNEEYNTES. Residues 196–223 traverse the membrane as a helical segment; it reads YTYFLLVSCFMMPIMIITFSYSQLLGAL. Residues 224 to 245 lie on the Cytoplasmic side of the membrane; the sequence is RAVAAQQAESASTQKAEKEVSR. The helical transmembrane segment at 246-269 threads the bilayer; the sequence is MVVVMVGSFVVCYGPYAITALYFS. Topologically, residues 270-277 are extracellular; it reads YAEDSNKD. The helical transmembrane segment at 278–302 threads the bilayer; the sequence is YRLVAIPSLFSKSSCVYNPLIYAFM. Lysine 289 is modified (N6-(retinylidene)lysine). Topologically, residues 303-336 are cytoplasmic; that stretch reads NKQFNACIMETVFGKKIDESSEVSSKTETSSVSA.

This sequence belongs to the G-protein coupled receptor 1 family. Opsin subfamily. Phosphorylated on some or all of the serine and threonine residues present in the C-terminal region.

The protein localises to the membrane. Visual pigments are the light-absorbing molecules that mediate vision. They consist of an apoprotein, opsin, covalently linked to cis-retinal. The polypeptide is Ultraviolet-sensitive opsin (Carassius auratus (Goldfish)).